The chain runs to 122 residues: Large ribosomal subunit protein uL14c (122 aa).

The protein belongs to the universal ribosomal protein uL14 family. Part of the 50S ribosomal subunit.

The protein localises to the plastid. The protein resides in the chloroplast. Its function is as follows. Binds to 23S rRNA. The sequence is that of Large ribosomal subunit protein uL14c from Populus alba (White poplar).